The sequence spans 321 residues: NADH-ubiquinone oxidoreductase chain 1 (321 aa).

A run of 8 helical transmembrane segments spans residues 5 to 25, 74 to 94, 104 to 124, 151 to 171, 175 to 195, 227 to 247, 256 to 276, and 296 to 316; these read LVTL…AFLT, LLIL…APIP, LGLL…LWAG, GIIL…LLTI, YTWL…STLA, FFLA…ILFI, ELFL…FLWI, and FLPM…SISG.

Belongs to the complex I subunit 1 family.

It localises to the mitochondrion inner membrane. The enzyme catalyses a ubiquinone + NADH + 5 H(+)(in) = a ubiquinol + NAD(+) + 4 H(+)(out). Core subunit of the mitochondrial membrane respiratory chain NADH dehydrogenase (Complex I) that is believed to belong to the minimal assembly required for catalysis. Complex I functions in the transfer of electrons from NADH to the respiratory chain. The immediate electron acceptor for the enzyme is believed to be ubiquinone. In Varanus baritji (Black-spotted ridge-tailed monitor), this protein is NADH-ubiquinone oxidoreductase chain 1 (MT-ND1).